We begin with the raw amino-acid sequence, 333 residues long: Procathepsin L (333 aa).

Residues 1 to 17 (MNPTLILAAFCLGIASA) form the signal peptide. Residues 18 to 113 (TLTFDHSLEA…KVFQEPLFYE (96 aa)) constitute a propeptide, activation peptide. E122 contributes to the Zn(2+) binding site. Cystine bridges form between C135–C178 and C169–C211. C138 is a catalytic residue. The Zn(2+) site is built by E163, D184, E199, E205, and E209. N221 carries an N-linked (GlcNAc...) asparagine glycan. D227, D250, H253, D273, and D275 together coordinate Zn(2+). The cysteines at positions 269 and 322 are disulfide-linked. Residue H276 is part of the active site. The propeptide occupies 289–291 (ESD). N300 is a catalytic residue.

Belongs to the peptidase C1 family. In terms of assembly, dimer of a heavy and a light chain linked by disulfide bonds. Interacts with Long isoform of CD74/Ii chain; the interaction stabilizes the conformation of mature CTSL. In terms of processing, during export along the endocytic pathway, pro-CTSL undergoes several proteolytic cleavages to generate the CTSL single-chain and two-chain mature forms, composed of a heavy chain linked to a light chain by disulfide bonds. Autocleavage; produces the single-chain CTSL after cleavage of the propeptide. The cleavage can be intermolecular.

The protein localises to the lysosome. Its subcellular location is the apical cell membrane. It localises to the cytoplasmic vesicle. The protein resides in the secretory vesicle. It is found in the chromaffin granule. The protein localises to the secreted. Its subcellular location is the extracellular space. It localises to the nucleus. It catalyses the reaction Specificity close to that of papain. As compared to cathepsin B, cathepsin L exhibits higher activity toward protein substrates, but has little activity on Z-Arg-Arg-NHMec, and no peptidyl-dipeptidase activity.. Inhibited by the propeptide produced by autocleavage. Long isoform of CD74/Ii chain stabilizes the conformation of mature CTSL by binding to its active site and serving as a chaperone to help maintain a pool of mature enzyme in endocytic compartments and extracellular space of APCs. IFNG enhances the conversion into the CTSL mature and active form. Inhibited by CST6. Inhibited by the glycopeptide antibiotic teicoplanin. Inhibited by amantadine. Thiol protease important for the overall degradation of proteins in lysosomes. Plays a critical for normal cellular functions such as general protein turnover, antigen processing and bone remodeling. Involved in the solubilization of cross-linked TG/thyroglobulin and in the subsequent release of thyroid hormone thyroxine (T4) by limited proteolysis of TG/thyroglobulin in the thyroid follicle lumen. In neuroendocrine chromaffin cells secretory vesicles, catalyzes the prohormone proenkephalin processing to the active enkephalin peptide neurotransmitter. In thymus, regulates CD4(+) T cell positive selection by generating the major histocompatibility complex class II (MHCII) bound peptide ligands presented by cortical thymic epithelial cells. Also mediates invariant chain processing in cortical thymic epithelial cells. Major elastin-degrading enzyme at neutral pH. Accumulates as a mature and active enzyme in the extracellular space of antigen presenting cells (APCs) to regulate degradation of the extracellular matrix in the course of inflammation. Secreted form generates endostatin from COL18A1. Critical for cardiac morphology and function. Plays an important role in hair follicle morphogenesis and cycling, as well as epidermal differentiation. Required for maximal stimulation of steroidogenesis by TIMP1. In terms of biological role, (Microbial infection) In cells lacking TMPRSS2 expression, facilitates human coronaviruses SARS-CoV and SARS-CoV-2 infections via a slow acid-activated route with the proteolysis of coronavirus spike (S) glycoproteins in lysosome for entry into host cell. Proteolysis within lysosomes is sufficient to activate membrane fusion by coronaviruses SARS-CoV and EMC (HCoV-EMC) S as well as Zaire ebolavirus glycoproteins. Its function is as follows. Functions in the regulation of cell cycle progression through proteolytic processing of the CUX1 transcription factor. Translation initiation at downstream start sites allows the synthesis of isoforms that are devoid of a signal peptide and localize to the nucleus where they cleave the CUX1 transcription factor and modify its DNA binding properties. The sequence is that of Procathepsin L from Homo sapiens (Human).